The chain runs to 240 residues: MASARNLLLLSSSRLHGHGYLEHARGQLEDLFKSANVKTVLFVPYALRDHDKYTATVRDALQPWGFNVEGLHTKPDREQALREAQAIFVGGGNTFVLLRSLYEMKLLDPIRELVLQRGLPYVGSSAGTNVATRSIHTTNDMPVAYPPSFEALALVPFNINPHYLDPEAGSRHKGETRDERLEEFVAYHGLPVLGLREGTSVRVQGEKAILLGDRNAKLFKADGGTEELAPLADLTFLLQK.

Residues serine 125, aspartate 140, and histidine 162 each act as charge relay system in the active site.

The protein belongs to the peptidase S51 family.

Its subcellular location is the cytoplasm. The enzyme catalyses Dipeptidase E catalyzes the hydrolysis of dipeptides Asp-|-Xaa. It does not act on peptides with N-terminal Glu, Asn or Gln, nor does it cleave isoaspartyl peptides.. Its function is as follows. Hydrolyzes dipeptides containing N-terminal aspartate residues. The chain is Probable alpha-aspartyl dipeptidase from Drosophila melanogaster (Fruit fly).